We begin with the raw amino-acid sequence, 953 residues long: Scaffold attachment factor B2 (953 aa).

Positions 1–29 (MAETLPGSGDSGPGTASLGPGVAETGTRR) are disordered. N-acetylalanine is present on A2. Positions 30-64 (LSELRVIDLRAELKKRNLDTGGNKSVLMERLKKAV) constitute an SAP domain. S54 is modified (phosphoserine). A Glycyl lysine isopeptide (Lys-Gly) (interchain with G-Cter in SUMO1); alternate cross-link involves residue K65. Residue K65 forms a Glycyl lysine isopeptide (Lys-Gly) (interchain with G-Cter in SUMO2); alternate linkage. A disordered region spans residues 91–114 (KGLKMEEEGTEDNGLEDDSRDGQE). K94 is covalently cross-linked (Glycyl lysine isopeptide (Lys-Gly) (interchain with G-Cter in SUMO2)). A compositionally biased stretch (acidic residues) spans 98–114 (EGTEDNGLEDDSRDGQE). Residues S109 and S158 each carry the phosphoserine modification. Glycyl lysine isopeptide (Lys-Gly) (interchain with G-Cter in SUMO2) cross-links involve residues K188 and K199. Phosphothreonine is present on T201. A Phosphoserine modification is found at S207. The interval 219-404 (ILGETCKSEP…KDEKGRVGSG (186 aa)) is disordered. Residues 224-233 (CKSEPVKEES) are compositionally biased toward basic and acidic residues. K230 participates in a covalent cross-link: Glycyl lysine isopeptide (Lys-Gly) (interchain with G-Cter in SUMO). Residues 274–285 (SESTAHAQSSKA) are compositionally biased toward polar residues. The segment covering 292-308 (VKREPAEQPGDGERTDC) has biased composition (basic and acidic residues). Residue K293 forms a Glycyl lysine isopeptide (Lys-Gly) (interchain with G-Cter in SUMO) linkage. The span at 318–329 (EQSSAASELAEA) shows a compositional bias: low complexity. Residues 345 to 358 (EARDSKEDGRKFDF) show a composition bias toward basic and acidic residues. Over residues 370–382 (ESSTSEGADQKMS) the composition is skewed to polar residues. Glycyl lysine isopeptide (Lys-Gly) (interchain with G-Cter in SUMO2) cross-links involve residues K380, K385, K388, K391, and K395. Residues 383-400 (SFKEEKDIKPIIKDEKGR) are compositionally biased toward basic and acidic residues. The RRM domain occupies 407 to 485 (RNLWVSGLSS…RMISVEKAKN (79 aa)). Phosphoserine is present on residues S507 and S513. Residues K517, K524, K525, K541, K542, and K551 each participate in a glycyl lysine isopeptide (Lys-Gly) (interchain with G-Cter in SUMO2) cross-link. The span at 525 to 551 (KEEKIEKKEEKKPEDIKKEEKDQDELK) shows a compositional bias: basic and acidic residues. Disordered stretches follow at residues 525-665 (KEEK…RLQR) and 684-953 (RERL…TRRY). Residues 555 to 564 (TNRSRVTKSG) show a composition bias toward polar residues. Basic and acidic residues predominate over residues 567-579 (GMERTVVMDKSKG). Glycyl lysine isopeptide (Lys-Gly) (interchain with G-Cter in SUMO2) cross-links involve residues K578, K586, and K608. Composition is skewed to basic and acidic residues over residues 590 to 665 (RSKE…RLQR) and 684 to 820 (RERL…DSRD). The segment at 600-953 (DRKSESKEKR…PPYPHFTRRY (354 aa)) is interaction with SAFB1. K616 is covalently cross-linked (Glycyl lysine isopeptide (Lys-Gly) (interchain with G-Cter in SUMO2); alternate). K616 carries the N6-acetyllysine; alternate modification. Residues 713–730 (RRQQEQLRYEQERRPGRR) carry the Nuclear localization signal motif. Residues S787 and S832 each carry the phosphoserine modification. The segment covering 843-859 (GGRDWGEHNQRLEEHQA) has biased composition (basic and acidic residues). Positions 881–890 (GERGLSGPSG) are enriched in gly residues. Residue S886 is modified to Phosphoserine. R897 and R903 each carry omega-N-methylarginine. Over residues 899–927 (GVAGRGGFAQGGHSQGHVVPGGGLEGGGV) the composition is skewed to gly residues.

As to quaternary structure, interacts with SAFB/SAFB1 and SCAM1. Interacts with isoform 2 SRPK1 and inhibits its activity. As to expression, expressed at high levels in the CNS and at low levels in the liver. Expressed in a wide number of breast cancer cell lines.

It localises to the cytoplasm. The protein localises to the nucleus. Binds to scaffold/matrix attachment region (S/MAR) DNA. Can function as an estrogen receptor corepressor and can also inhibit cell proliferation. The sequence is that of Scaffold attachment factor B2 (SAFB2) from Homo sapiens (Human).